The sequence spans 2904 residues: Highly reducing polyketide synthase bet1 (2904 aa).

The Ketosynthase family 3 (KS3) domain occupies 8-441 (NEPIAIVGSG…GTNAHAIVES (434 aa)). Catalysis depends on for beta-ketoacyl synthase activity residues C181, H320, and H361. An acyl transferase (AT) domain region spans residues 553–875 (VFTGQGAQYA…PYHGTLLRGG (323 aa)). An N-terminal hotdog fold region spans residues 948 to 1081 (HQLLGDVSPD…GELKVVLVDE (134 aa)). The PKS/mFAS DH domain maps to 948–1257 (HQLLGDVSPD…FKPVGSDASN (310 aa)). Residues 971–1255 (PREMTWLEGH…VKFKPVGSDA (285 aa)) form a dehydratase (DH) domain region. The active-site Proton acceptor; for dehydratase activity is H980. Residues 1098–1257 (MIPVQPSRLY…FKPVGSDASN (160 aa)) form a C-terminal hotdog fold region. D1159 functions as the Proton donor; for dehydratase activity in the catalytic mechanism. Positions 1411-1596 (KQSTLWVASI…GFSGIDTMSP (186 aa)) are methyltransferase (cMeT) domain. The tract at residues 2125-2298 (TYWLVGLSGA…RSSVVNVGAI (174 aa)) is ketoreductase (KR)domain. The Carrier domain maps to 2407 to 2486 (EVANVIKQAY…SLVELAAESI (80 aa)). An O-(pantetheine 4'-phosphoryl)serine modification is found at S2445. The interval 2492–2543 (PGVPQANANPNGPSSPDSDATESSNQNSDVDVTSTRATSPSTPAATSPDSNV) is disordered. The span at 2497-2523 (ANANPNGPSSPDSDATESSNQNSDVDV) shows a compositional bias: polar residues. Residues 2524 to 2541 (TSTRATSPSTPAATSPDS) show a composition bias toward low complexity. Residues 2585 to 2817 (LTGCSGLLGH…DLVSVETCCE (233 aa)) are reductase (R) domain.

It depends on pantetheine 4'-phosphate as a cofactor.

The enzyme catalyses 7 malonyl-CoA + acetyl-CoA + 10 AH2 + 5 S-adenosyl-L-methionine + 2 H(+) = dehydroprobetaenone I + 10 A + 5 S-adenosyl-L-homocysteine + 7 CO2 + 8 CoA + 6 H2O. It participates in mycotoxin biosynthesis. Functionally, highly reducing polyketide synthase; part of the gene cluster that mediates the biosynthesis of betaenones, phytotoxic polyketides involved in leaf spot disease in sugar beets. The first step of the pathway is the synthesis of dehydroprobetaenone I by the polyketide synthase bet1 and the enoyl reductase bet3 via condensation of one acetyl-CoA starter unit with 7 malonyl-CoA units and 5 methylations. The C-terminal reductase (R) domain of bet1 catalyzes the reductive release of the polyketide chain. Because bet1 lacks a designated enoylreductase (ER) domain, the required activity is provided the enoyl reductase bet3. The short-chain dehydrogenase/reductase bet4 then catalyzes reduction of dehydroprobetaenone I to probetaenone I. The cytochrome P450 monooxygenase bet2 catalyzes successive epoxidation, oxidation (resulting from epoxide opening) and hydroxylation to install a tertiary alcohol in the decaline ring to yield betaenone C from dehydroprobetaenone I and betaenone B from probetaenone I. The FAD-linked oxidoreductase (orf1) is probably responsible for the conversion of betaenone C to betaenone A via an intramolecular aldol reaction between C-1 and C-17 to form the bridged tricyclic system in betaenone A. The sequence is that of Highly reducing polyketide synthase bet1 from Neocamarosporium betae (Beet black rot fungus).